A 495-amino-acid polypeptide reads, in one-letter code: MAQSFANEHDPAKRAEERGHVGTIEDVESGTKEPYIAEEPISAEAARALIWKQDKRIIPLSAAIYFLCYLDRSNIGNAKILNAATGNDLLTETHMTNYDYTIALMIFFLAYGLFEVPSNVLLKKLHPSRWIAILMFSWGAISMGLAGAHNYATVTVVRFLLGIFEAGLFPGLVYYLTFWYKTEERSIRVAFILASATLAGAFGGAIAYAVGHMNQAHGISAWRWLFIIEGAPSCVSALFVLFFLPDYPETVNWLSDEERELALRRLRVEGSKGLHQSDWWKDAKSTLVEWRLWAHYLIYFGISTPFSSLSLFTPSITAGLGYDGLQAQLMTVPPYAVAYVVQILVSWSADRTNSRGLHSAASATVGACGFLASAVLPAEAYLHRYGCLIVAAAGAFACIPPLLGWLSSNIFSTASVGLAIALNIGLGGAPGQIAGVWIYKADEAKKGYPTGHWVNAGLLFFVAVACVALRLHYGFRNRKTVRETGGIEGVRLFKY.

The segment at 1–24 is disordered; sequence MAQSFANEHDPAKRAEERGHVGTI. Over residues 7-20 the composition is skewed to basic and acidic residues; the sequence is NEHDPAKRAEERGH. 11 consecutive transmembrane segments (helical) span residues 102-122, 130-150, 159-179, 189-209, 224-244, 292-312, 329-349, 356-376, 386-406, 418-438, and 449-469; these read IALM…NVLL, WIAI…GAHN, FLLG…LTFW, VAFI…IAYA, WLFI…LFFL, LWAH…LSLF, LMTV…SWSA, GLHS…SAVL, GCLI…LGWL, LAIA…GVWI, and PTGH…CVAL.

It belongs to the major facilitator superfamily.

The protein localises to the cell membrane. Efflux pump that might be required for efficient secretion of pyrrolocin or other secondary metabolies produced by the pyrrolocin gene cluster. The chain is MFS transporter prlL from Fungal sp. (strain NRRL 50135).